Reading from the N-terminus, the 120-residue chain is Synaptobrevin (120 aa).

Positions 1–38 are disordered; it reads MSAPPSGPAPDAQGGAPGQPTGPPGAPPNTTSNRRLQQ. The Cytoplasmic segment spans residues 1 to 98; the sequence is MSAPPSGPAP…KRKYWWKNCK (98 aa). Residues 29 to 38 are compositionally biased toward polar residues; sequence NTTSNRRLQQ. Positions 35–95 constitute a v-SNARE coiled-coil homology domain; the sequence is RLQQTQAQVE…AKLKRKYWWK (61 aa). The chain crosses the membrane as a helical; Anchor for type IV membrane protein span at residues 99–118; sequence MMIMLGGIGAIIVIVIIIYF. Residues 119–120 are Vesicular-facing; the sequence is FT.

Belongs to the synaptobrevin family. As to expression, nervous system specific.

It localises to the cytoplasmic vesicle. Its subcellular location is the secretory vesicle. The protein resides in the synaptic vesicle membrane. The protein localises to the synapse. It is found in the synaptosome. Its function is as follows. This protein may play a role in packaging, transport or release of neurotransmitters. This chain is Synaptobrevin, found in Tetronarce californica (Pacific electric ray).